The primary structure comprises 348 residues: MNLNKILKLIPKTDLHCHLDGSLRPETILDIAYKENIPLPNKELANFQEEIKVIGKCTSLKEYLNKFNLPIQIMQKEEHIYRVTLELLEDALKQNIKYIEIRFAPFNHLKDGLTLDQVINTVLTAMNYGRTHLNIMSNLILCILRQEPVEKGIELVNTAKKYVGKGVVAVDLAGNESDFPPEIHEEAFTLARKYGLHRTVHAGETGLPENIIKSINILGAERIGHGTYAYKDKEIITCLKENRIPLEVCITSNVNTSAVTSYQEHPIKKYLDEDLIITVNTDNTTVSNTNLIEEFNYLIKYQSFRFDDIKKVIKNGIESSFASKEDINKLYEEYLSAINVIELTNPIL.

Zn(2+) contacts are provided by His16 and His18. 3 residues coordinate substrate: His18, Asp20, and Gly174. Zn(2+) is bound at residue His201. The active-site Proton donor is the Glu204. Asp282 is a Zn(2+) binding site.

Belongs to the metallo-dependent hydrolases superfamily. Adenosine and AMP deaminases family. Adenosine deaminase subfamily. Zn(2+) is required as a cofactor.

The enzyme catalyses adenosine + H2O + H(+) = inosine + NH4(+). It catalyses the reaction 2'-deoxyadenosine + H2O + H(+) = 2'-deoxyinosine + NH4(+). Its function is as follows. Catalyzes the hydrolytic deamination of adenosine and 2-deoxyadenosine. This chain is Adenosine deaminase, found in Clostridium kluyveri (strain ATCC 8527 / DSM 555 / NBRC 12016 / NCIMB 10680 / K1).